The primary structure comprises 91 residues: MAASSRAQVLDLYRAMLRESKRFGAYNYRTYAIRRIRDAFRENKNVKDPVEIQALVNKAKRDLGIIRRQVHIGQMYSTDKLVIENQEKPRA.

The pantetheine 4'-phosphate site is built by arginine 6 and lysine 44. At lysine 47 the chain carries N6-succinyllysine.

Belongs to the complex I LYR family. As to quaternary structure, homodimer. Component of the mitochondrial core iron-sulfur cluster (ISC) complex composed of NFS1, LYRM4, NDUFAB1, ISCU, FXN, and FDX2; this complex is a heterohexamer containing two copies of each monomer. Component of the cyteine desulfurase complex composed of NFS1, LYRM4 and NDUFAB1; this complex contributes to the stability and cysteine desulfurase activity of NFS1. Interacts with FXN; this interaction is nickel-dependent. Interacts with the cytoplasmic form of NFS1; the complex increases the stability of NFS1. Forms a complex with the cytoplasmic form of NFS1; this complex increases the stability and cysteine desulfurase activity of NFS1. Interacts with NFS1.

The protein localises to the mitochondrion. Its subcellular location is the nucleus. Its pathway is cofactor biosynthesis; iron-sulfur cluster biosynthesis. In terms of biological role, stabilizing factor, of the core iron-sulfur cluster (ISC) assembly complex, that regulates, in association with NDUFAB1, the stability and the cysteine desulfurase activity of NFS1 and participates in the [2Fe-2S] clusters assembly on the scaffolding protein ISCU. The core iron-sulfur cluster (ISC) assembly complex is involved in the de novo synthesis of a [2Fe-2S] cluster, the first step of the mitochondrial iron-sulfur protein biogenesis. This process is initiated by the cysteine desulfurase complex (NFS1:LYRM4:NDUFAB1) that produces persulfide which is delivered on the scaffold protein ISCU in a FXN-dependent manner. Then this complex is stabilized by FDX2 which provides reducing equivalents to accomplish the [2Fe-2S] cluster assembly. Finally, the [2Fe-2S] cluster is transferred from ISCU to chaperone proteins, including HSCB, HSPA9 and GLRX5. May also participates in the iron-sulfur protein biogenesis in the cytoplasm through its interaction with the cytoplasmic form of NFS1. This chain is LYR motif-containing protein 4, found in Bos taurus (Bovine).